The primary structure comprises 170 residues: MSSNECFKCGRSGHWARECPTGGGRGRGMRSRGRGFQFVSSSLPDICYRCGESGHLAKDCDLQEDACYNCGRGGHIAKDCKEPKREREQCCYNCGKPGHLARDCDHADEQKCYSCGEFGHIQKDCTKVKCYRCGETGHVAINCSKTSEVNCYRCGESGHLARECTIEATA.

Position 2 is an N-acetylserine (Ser2). The CCHC-type 1 zinc-finger motif lies at 4 to 21 (NECFKCGRSGHWARECPT). Lys8 bears the N6-acetyllysine mark. Arg25 and Arg27 each carry omega-N-methylarginine; by PRMT1. Positions 25–33 (RGRGMRSRG) are RNA-binding Arg/Gly-rich region (RGG-box). The residue at position 42 (Ser42) is a Phosphoserine. CCHC-type zinc fingers lie at residues 45-62 (DICY…DCDL), 65-82 (DACY…DCKE), 89-106 (QCCY…DCDH), 110-127 (QKCY…DCTK), 128-145 (VKCY…NCSK), and 149-166 (VNCY…ECTI). Arg72 bears the Omega-N-methylarginine mark.

Associates with the 40S ribosomal subunit, the 80S ribosome and with polysomes. Arginine methylation by PRMT1 in the Arg/Gly-rich region impedes RNA binding.

It localises to the nucleus. The protein resides in the cytoplasm. Its subcellular location is the endoplasmic reticulum. Single-stranded DNA-binding protein that preferentially binds to the sterol regulatory element (SRE) sequence 5'-GTGCGGTG-3', and thereby mediates transcriptional repression. Has a role as transactivator of the Myc promoter. Binds single-stranded RNA in a sequence-specific manner. Binds G-rich elements in target mRNA coding sequences. Prevents G-quadruplex structure formation in vitro, suggesting a role in supporting translation by resolving stable structures on mRNAs. This is CCHC-type zinc finger nucleic acid binding protein (CNBP) from Bos taurus (Bovine).